Here is an 89-residue protein sequence, read N- to C-terminus: Small ribosomal subunit protein uS15 (89 aa).

This sequence belongs to the universal ribosomal protein uS15 family. In terms of assembly, part of the 30S ribosomal subunit. Forms a bridge to the 50S subunit in the 70S ribosome, contacting the 23S rRNA.

Its function is as follows. One of the primary rRNA binding proteins, it binds directly to 16S rRNA where it helps nucleate assembly of the platform of the 30S subunit by binding and bridging several RNA helices of the 16S rRNA. Forms an intersubunit bridge (bridge B4) with the 23S rRNA of the 50S subunit in the ribosome. In Shewanella putrefaciens (strain CN-32 / ATCC BAA-453), this protein is Small ribosomal subunit protein uS15.